The primary structure comprises 89 residues: Neurotoxin beta-KTx 52.1 (89 aa).

An N-terminal signal peptide occupies residues 1-20 (MKQYIFFLALIVLTATFAEA). Positions 21–39 (GKKTEILDKVKKVFSKAKD) are excised as a propeptide. The region spanning 53–89 (ELGCPFIDKWCEDHCDSKKLVGKCENFDCSCVKLGGK) is the BetaSPN-type CS-alpha/beta domain. 3 disulfide bridges follow: Cys-56/Cys-76, Cys-63/Cys-81, and Cys-67/Cys-83.

This sequence belongs to the long chain scorpion toxin family. Class 2 subfamily. As to expression, expressed by the venom gland.

The protein resides in the secreted. In terms of biological role, inhibits voltage-gated potassium channel. The polypeptide is Neurotoxin beta-KTx 52.1 (Lychas mucronatus (Chinese swimming scorpion)).